A 1460-amino-acid polypeptide reads, in one-letter code: DNA-binding protein RFX7 (1460 aa).

The disordered stretch occupies residues 1-34; sequence MAEEQQQPPPQQPDAHQQLPPSAPNSGVALPALV. The RFX-type winged-helix DNA-binding region spans 108–183; the sequence is AFSWIRNTLE…YCYSGLRKKA (76 aa). Positions 188–193 match the PxLPxI/L motif; mediates interaction with ANKRA2 and RFXANK motif; the sequence is PTLPNL. The tract at residues 308–352 is disordered; the sequence is QRKIQKKQQEQKLQSPLPGESAAKKSESATSNGVTNLPNGNPSIL. Position 322 is a phosphoserine (Ser-322). Positions 337-352 are enriched in polar residues; that stretch reads TSNGVTNLPNGNPSIL. Position 379 is a phosphoserine (Ser-379). Polar residues predominate over residues 404–416; it reads SVKQAPKTPQNVP. A disordered region spans residues 404–428; the sequence is SVKQAPKTPQNVPASPGGDRSARHR. Phosphoserine is present on residues Ser-418 and Ser-455. Polar residues predominate over residues 481-513; sequence TPSNSNTPLKHSASVSSATGTTEESRSVPQIKN. Disordered stretches follow at residues 481-585, 632-715, and 917-1015; these read TPSN…PSNE, TFTS…AQIP, and QSVT…SVPP. Positions 515-535 are enriched in low complexity; the sequence is SVVSLQSPGSRSSSAGGTSAV. A compositionally biased stretch (basic and acidic residues) spans 537 to 549; that stretch reads VKVEPETSSDEHP. Composition is skewed to polar residues over residues 563–583 and 632–644; these read QTPS…QKPS and TFTS…NGDS. Thr-564 carries the phosphothreonine modification. The residue at position 662 (Ser-662) is a Phosphoserine. Lys-704 carries the post-translational modification N6-acetyllysine. Polar residues-rich tracts occupy residues 705–715 and 917–933; these read TEGSTAGAQIP and QSVT…SSTH. Pro residues predominate over residues 947-963; it reads TPTPTPTPTPTPTPTPT. The span at 971-1009 shows a compositional bias: polar residues; sequence GSQSLSRESPCSRLAQTTPVDSALGSSRHTPIGTPHSNC. A Phosphothreonine modification is found at Thr-988. 2 positions are modified to phosphoserine: Ser-1178 and Ser-1329.

It belongs to the RFX family. Interacts (via PxLPxI/L motif) with RFXANK (via ankyrin repeats). Interacts (via PxLPxI/L motif) with ANKRA2 (via ankyrin repeats). Widely expressed in many different tissue types including thymus and placenta, with high expression in brain. Expressed in both inhibitory and excitatory neurons in cortex.

It localises to the nucleus. Its function is as follows. Transcription factor. Acts as a transcriptional activator by binding to promoter regions of target genes, such as PDCD4, PIK3IP1, MXD4, PNRC1, and RFX5. Plays a role in natural killer (NK) cell maintenance and immunity. May play a role in the process of ciliogenesis in the neural tube and neural tube closure. This chain is DNA-binding protein RFX7, found in Homo sapiens (Human).